The sequence spans 170 residues: Probable chorismate pyruvate-lyase (170 aa).

Residues Arg-77, Leu-114, and Glu-157 each contribute to the substrate site.

It belongs to the UbiC family.

Its subcellular location is the cytoplasm. It catalyses the reaction chorismate = 4-hydroxybenzoate + pyruvate. Its pathway is cofactor biosynthesis; ubiquinone biosynthesis. Its function is as follows. Removes the pyruvyl group from chorismate, with concomitant aromatization of the ring, to provide 4-hydroxybenzoate (4HB) for the ubiquinone pathway. The polypeptide is Probable chorismate pyruvate-lyase (Pasteurella multocida (strain Pm70)).